The following is a 580-amino-acid chain: MFS-type transporter thnB (580 aa).

The disordered stretch occupies residues 1–33 (MSGDYSATRKSENVDTSTTASQEDSSLAPEQPE). Over residues 14–25 (VDTSTTASQEDS) the composition is skewed to polar residues. The next 7 membrane-spanning stretches (helical) occupy residues 60 to 80 (LITLVLAINLAMFLASLDQTI), 92 to 112 (FHGLSQVSWYGSAYFMCLGGF), 125 to 145 (LKISFAIAVFVFELGSLICGV), 157 to 177 (AIAGIGGAGITSGSTVILAFS), 188 to 208 (STMGVTYCIAFILGPLIGGAF), 216 to 236 (WCFYINLPIGGLAMALFFLFF), and 259 to 279 (VGTVLAMGGIISFILALQYAG). Asn285 carries an N-linked (GlcNAc...) asparagine glycan. Transmembrane regions (helical) follow at residues 286 to 306 (SSVVIGLLVGFVLIMVTLAAW), 331 to 351 (IFQFFFVGCYFLLLFYLPIYF), 364 to 384 (VDNLPLVLSACLFIILGGAAV), 389 to 409 (MATPYMTAGSAVAAVATGLLY), 421 to 441 (IGYQVLVGAGLAFPFQNALNI), 457 to 477 (SLYFFQILGGAFSISAAQAAF), and 529 to 549 (FAVSVGLVGMAFLSSLHMVMI).

The protein belongs to the major facilitator superfamily.

Its subcellular location is the membrane. In terms of biological role, MFS-type transporter; part of the gene cluster that produces the tetronate natural products trihazones. This chain is MFS-type transporter thnB, found in Trichoderma harzianum (Hypocrea lixii).